Reading from the N-terminus, the 415-residue chain is Serine/threonine-protein kinase H1 homolog (415 aa).

A disordered region spans residues 1–70 (MGCMSSKLVP…SNRKVKKYRD (70 aa)). Residues 41-50 (GPRDPTKDPK) are compositionally biased toward basic and acidic residues. Residues 80–334 (YDIKALIGRG…AADALKHQWL (255 aa)) enclose the Protein kinase domain. ATP contacts are provided by residues 86–94 (IGRGNFSKV) and Lys-109. Catalysis depends on Asp-198, which acts as the Proton acceptor. Polar residues predominate over residues 353 to 362 (NLIHRQSTRA). Positions 353 to 415 (NLIHRQSTRA…DVQADLASLG (63 aa)) are disordered. Residues 363–385 (NSTKSAKSTRSTKSNKSNRSGRS) show a composition bias toward low complexity. The segment covering 386–406 (LRSEHRRVMPDEIDELHRDPD) has biased composition (basic and acidic residues).

Belongs to the protein kinase superfamily. CAMK Ser/Thr protein kinase family.

It catalyses the reaction L-seryl-[protein] + ATP = O-phospho-L-seryl-[protein] + ADP + H(+). The catalysed reaction is L-threonyl-[protein] + ATP = O-phospho-L-threonyl-[protein] + ADP + H(+). In Pinctada fucata (Akoya pearl oyster), this protein is Serine/threonine-protein kinase H1 homolog (PSKH1).